The chain runs to 356 residues: Glutamine synthetase cytosolic isozyme 1-4 (356 aa).

At Ser-2 the chain carries N-acetylserine. Ser-2 and Ser-48 each carry phosphoserine. The GS beta-grasp domain maps to 19 to 99 (IIAEYIWIGG…VMCDAYTPAG (81 aa)). The disordered stretch occupies residues 37–66 (ARTLPGPVTDPSQLPKWNYDGSSTGQAPGD). Residues 106 to 356 (KRHAAAKIFE…IAESTILWKP (251 aa)) form the GS catalytic domain.

Belongs to the glutamine synthetase family. Homooctamer. Interacts with GRF3. In terms of tissue distribution, expressed in the pericycle in the region of lateral root emergence.

The protein resides in the cytoplasm. It carries out the reaction L-glutamate + NH4(+) + ATP = L-glutamine + ADP + phosphate + H(+). High-affinity glutamine synthetase. May contribute to the homeostatic control of glutamine synthesis in roots. The chain is Glutamine synthetase cytosolic isozyme 1-4 from Arabidopsis thaliana (Mouse-ear cress).